The sequence spans 523 residues: MDSFLSQPITIVLAILSVLLYNIWKIRKPSNKFQKGMKLPQLSFALPLIGHLHLLGNQIPLAKTFASFADKYGPIFQIRLGAYPTLVISNKEAIKECFTTNDKILASRTKSTHGILLGYNHASFACAPYGRFWAKIRKVTMLELLSSRRVESLRHVYESEIDTLVKDLSLYVKVGKVEVVISEWMERLTFNIITKMICGKRYFEYLQDVDDVEANGNIVKLIKEVMHISGELVPKDVIPILGWFGFEGEVLKSMKRVSRDLDEVVGKWVEEHIEKSDDGVNNSNEKQDLIDVMLSVIEDDPDSGNDRDTIIKANIVNLMIAGSDTTSTTMTWILVLLLNNMNALKRAQEEIDQHIGRDRKIESSDIKNLVYLQAIVKETLRLHPTLPLSIPHEATEDCNIQGYYVPKGTRLFTNVWKLHRDPSIWLEPEKFSPERFINENGEIDHESHQFEYLPFGLGRRACPGSMFATQVIHIAVARLIHLFDFEVPINEVVDMKQGTGLILSKFTPLKVLLTPRLPYELYQ.

A helical transmembrane segment spans residues 4–24 (FLSQPITIVLAILSVLLYNIW). Cys-462 is a binding site for heme.

Belongs to the cytochrome P450 family. In terms of tissue distribution, mainly expressed in leaves and seed pods and, to a lower extent, in flowers and stems.

The protein localises to the membrane. Its pathway is steroid metabolism; cholesterol metabolism. Functionally, involved in the biosynthesis of spiroketal steroid and saponin natural products from cholesterol such as diosgenin and analogs (e.g. furostanol and spirostanol), plant defense compounds used as main precursors for the industrial production of steroid hormones. During the 5,6-spiroketalization of cholesterol, may catalyze the 27-monohydroxylation of furostanol-type steroid to an intermediate product that undergoes a stereospecific formation of the terminal heterocycle to yield diosgenin. In Trigonella foenum-graecum (Fenugreek), this protein is Cytochrome P450 CYP82J17.